The following is a 189-amino-acid chain: Elongation factor P (189 aa).

The protein belongs to the elongation factor P family.

Its subcellular location is the cytoplasm. The protein operates within protein biosynthesis; polypeptide chain elongation. Functionally, involved in peptide bond synthesis. Stimulates efficient translation and peptide-bond synthesis on native or reconstituted 70S ribosomes in vitro. Probably functions indirectly by altering the affinity of the ribosome for aminoacyl-tRNA, thus increasing their reactivity as acceptors for peptidyl transferase. The chain is Elongation factor P from Pseudomonas syringae pv. tomato (strain ATCC BAA-871 / DC3000).